The sequence spans 369 residues: Putative glutamate--cysteine ligase 2-1 (369 aa).

This sequence belongs to the glutamate--cysteine ligase type 2 family. YbdK subfamily.

The enzyme catalyses L-cysteine + L-glutamate + ATP = gamma-L-glutamyl-L-cysteine + ADP + phosphate + H(+). Functionally, ATP-dependent carboxylate-amine ligase which exhibits weak glutamate--cysteine ligase activity. This Rhodococcus jostii (strain RHA1) protein is Putative glutamate--cysteine ligase 2-1.